A 358-amino-acid polypeptide reads, in one-letter code: Putative ZDHHC-type palmitoyltransferase 4 (358 aa).

4 helical membrane-spanning segments follow: residues 28–48, 57–77, 171–191, and 210–230; these read FVGF…TIIF, LFFI…TYGI, YFFL…AHSL, and LLVI…GSFG. Residues 127-177 form the DHHC domain; it reads SYCKKCSKAKPPRCHHCSVCDKCVLKMDHHCPWIGGCVGFYNYRYFFLFLS. Asparagine 255 and asparagine 296 each carry an N-linked (GlcNAc...) asparagine glycan. The disordered stretch occupies residues 302–358; the sequence is NNKNNENNENNENNEIDNHNNNNNNNNNNNNNEKEDNINENDNLISYDTDEYNRHKK. The span at 305–332 shows a compositional bias: low complexity; that stretch reads NNENNENNENNEIDNHNNNNNNNNNNNN.

It belongs to the DHHC palmitoyltransferase family.

It localises to the membrane. It carries out the reaction L-cysteinyl-[protein] + hexadecanoyl-CoA = S-hexadecanoyl-L-cysteinyl-[protein] + CoA. This chain is Putative ZDHHC-type palmitoyltransferase 4, found in Dictyostelium discoideum (Social amoeba).